Consider the following 232-residue polypeptide: Aspartate/glutamate leucyltransferase (232 aa).

It belongs to the R-transferase family. Bpt subfamily.

It localises to the cytoplasm. It catalyses the reaction N-terminal L-glutamyl-[protein] + L-leucyl-tRNA(Leu) = N-terminal L-leucyl-L-glutamyl-[protein] + tRNA(Leu) + H(+). The catalysed reaction is N-terminal L-aspartyl-[protein] + L-leucyl-tRNA(Leu) = N-terminal L-leucyl-L-aspartyl-[protein] + tRNA(Leu) + H(+). Its function is as follows. Functions in the N-end rule pathway of protein degradation where it conjugates Leu from its aminoacyl-tRNA to the N-termini of proteins containing an N-terminal aspartate or glutamate. The protein is Aspartate/glutamate leucyltransferase of Vibrio vulnificus (strain YJ016).